Consider the following 266-residue polypeptide: Glucosamine-6-phosphate deaminase (266 aa).

The active-site Proton acceptor; for enolization step is Asp72. The For ring-opening step role is filled by Asp141. Residue His143 is the Proton acceptor; for ring-opening step of the active site. The active-site For ring-opening step is Glu148.

It belongs to the glucosamine/galactosamine-6-phosphate isomerase family. NagB subfamily. As to quaternary structure, homohexamer.

The catalysed reaction is alpha-D-glucosamine 6-phosphate + H2O = beta-D-fructose 6-phosphate + NH4(+). The protein operates within amino-sugar metabolism; N-acetylneuraminate degradation; D-fructose 6-phosphate from N-acetylneuraminate: step 5/5. Its activity is regulated as follows. Allosterically activated by N-acetylglucosamine 6-phosphate (GlcNAc6P). In terms of biological role, catalyzes the reversible isomerization-deamination of glucosamine 6-phosphate (GlcN6P) to form fructose 6-phosphate (Fru6P) and ammonium ion. The protein is Glucosamine-6-phosphate deaminase of Salmonella typhi.